A 149-amino-acid polypeptide reads, in one-letter code: 3-dehydroquinate dehydratase (149 aa).

Residue tyrosine 22 is the Proton acceptor of the active site. The substrate site is built by asparagine 74, histidine 80, and aspartate 87. Residue histidine 100 is the Proton donor of the active site. Residues 101–102 (LS) and arginine 111 contribute to the substrate site.

Belongs to the type-II 3-dehydroquinase family. Homododecamer.

The catalysed reaction is 3-dehydroquinate = 3-dehydroshikimate + H2O. The protein operates within metabolic intermediate biosynthesis; chorismate biosynthesis; chorismate from D-erythrose 4-phosphate and phosphoenolpyruvate: step 3/7. Its function is as follows. Catalyzes a trans-dehydration via an enolate intermediate. This is 3-dehydroquinate dehydratase from Vesicomyosocius okutanii subsp. Calyptogena okutanii (strain HA).